A 156-amino-acid chain; its full sequence is Urease accessory protein UreE (156 aa).

The segment at 133–156 (RPESGAYGSGRTMGHDHGPFHVHA) is disordered. Residues 145 to 156 (MGHDHGPFHVHA) are compositionally biased toward basic and acidic residues.

Belongs to the UreE family.

Its subcellular location is the cytoplasm. Its function is as follows. Involved in urease metallocenter assembly. Binds nickel. Probably functions as a nickel donor during metallocenter assembly. The protein is Urease accessory protein UreE of Rhodobacter capsulatus (Rhodopseudomonas capsulata).